Reading from the N-terminus, the 64-residue chain is Probable tautomerase lp_1712 (64 aa).

The Proton acceptor; via imino nitrogen role is filled by P2.

This sequence belongs to the 4-oxalocrotonate tautomerase family.

The protein is Probable tautomerase lp_1712 of Lactiplantibacillus plantarum (strain ATCC BAA-793 / NCIMB 8826 / WCFS1) (Lactobacillus plantarum).